The chain runs to 172 residues: MLDAFGKVVAQADARGEFISSAQFDALSKLASEGNKRLDAVQGITASAATIVSSAARSLFAEQPQLIAPGGNAYTNRRVAACLRDLEIVLRYITYATLAGDSSVLDDRCLNGLRETYQALGVPGSSVAVAIQKMKDAAVSVVNDPSGVTVGDCSALASEVASYFDRAAAAVV.

N72 is subject to N4-methylasparagine. Positions 82 and 153 each coordinate (2R,3E)-phycocyanobilin.

The protein belongs to the phycobiliprotein family. As to quaternary structure, heterodimer of an alpha and a beta subunit, which further assembles into trimers and the trimers into hexamers. The basic functional unit of phycobiliproteins is a ring-shaped hexamer formed from two back-to-back trimers contacting via the alpha chain subunits. The trimers are composed of alpha/beta subunit heterodimers arranged around a three-fold axis of symmetry. The phycoerythrins also contain a gamma subunit which is located in the center of the hexamer. Post-translationally, contains two covalently linked phycocyanobilin chromophores.

The protein localises to the plastid. Its subcellular location is the cyanelle thylakoid membrane. In terms of biological role, light-harvesting photosynthetic bile pigment-protein from the phycobiliprotein complex (phycobilisome, PBS). Phycocyanin is the major phycobiliprotein in the PBS rod. The polypeptide is C-phycocyanin beta chain (cpcB) (Cyanophora paradoxa).